Consider the following 497-residue polypeptide: Serine carboxypeptidase-like 20 (497 aa).

The first 29 residues, 1–29 (MSIITMVWLMKVFVFVTLLSLVFVITESA), serve as a signal peptide directing secretion. 3 disulfides stabilise this stretch: C90/C386, C254/C266, and C289/C353. N111 and N146 each carry an N-linked (GlcNAc...) asparagine glycan. S186 is a catalytic residue. N-linked (GlcNAc...) asparagine glycosylation is present at N249. An N-linked (GlcNAc...) asparagine glycan is attached at N405. The active site involves D421. N-linked (GlcNAc...) asparagine glycosylation occurs at N463. H474 is an active-site residue. Residues 495 to 497 (SKI) carry the Microbody targeting signal motif.

The protein belongs to the peptidase S10 family. In terms of tissue distribution, ubiquitous.

It localises to the secreted. Functionally, probable carboxypeptidase. The protein is Serine carboxypeptidase-like 20 (SCPL20) of Arabidopsis thaliana (Mouse-ear cress).